Consider the following 1378-residue polypeptide: MQVNDGPSSHPIFVAPVNGNAQRSSGYVPGRIVPVRSPPPAKAPPPPPLKPPVPPPARPSVFNLSEDGNRREQAQNQQRKNTYICVGIFFGIFLLILILVLSLTSKDVLDENCPHQNPALRSWKPGHDLKKVVVIHSGEHYRLDSSATLYSITIQAGGSVVFADDKKGSKNITLRTRHILIEDGGALHIGAPKCRYRSLATITLVGRSDETAVTEVPGMGRKFLGVNSGGTLELHGSERMSWTFLTRTVPASGLATGDHAFQKNFSRGINLRVVDQDTAEVLVNERFDTHESQDDSKRLGELLKALPAGRIVALATGDSAVKNLVFETKQTIHDLLGSNYISDLKYRDAWALVSVIGGGNGSCTEDVREHENHDTGGKALARQDFFTVDGVGFTVTAYSEWSNGYPTTGFQVDAVDKVVLNLQDDVSSWNPGDRIVVASTDYSMYQAEEFTLLPCPNCNRKQVQIQGKPQFSHVGEILDGVDMRAEVALLSRNILIHGEMENSCYGGNWCQYFSYDTFGGHIKILGNFTSVHLSHIELKHMGQQREKGRYPLNFHRCGDVDQSGGYSNPAYVDSLSIHHSFSRCVTVHATNGLLVKDTVGYDTLGHCFFLKDGIEQRNIFFHNLGLLTRPGTILPTDRNDSMCTEITDRVYKGYIPIPANECKAVSSFWIAHPNNHLISNSAAGSQDAGIWYVFHNSSTGDSHGMISETKAELTPLGTFFNNRVHSNFKAGLFIDRKVKSTNATAADPREYLCLDNSARFRPHESSDPSRPRVAAIIDTLISFKNNDLGAWIRGGDIIIRNSGDGSYPKDEGSSQEVSQSLFIGESRNRGTNGGQNKYWGIGGVDGKMRTLPRNKTFPIRGFQINDGPVRIFDSTFRAFSPTADRFTMAVGFSLKNIWQLTPRNNLSALAFHPSVTLRAFFGRPGDWFEQNDLDGDKNSIFHDLDGSISGYADTYVARADNFLIRHPQCVDMPQWNGVVCSGKYSQVYIQTQAASNLSLSISRDEYPDKPMVLRGIRTKTSPSQQYQPVLMMGKSYTMHWNGPAPRETVLSLINFDQDDWALLGLCYPNETVFQITSDIYNKQNNGFEGIEDYGPVTSIADLEKRQQERKYFFDKSAGLLWLYARARHRRDGNSYCSSAGCERVKIIATIRANQKTETCNCTANAYPKYSKPASNIVPMPKPNTEPCGACGASQFAFSSDPWNSYLQTQIKSLSVKEEQDNDTQAYITVNAQRFDLSQSGFLLVTVDACSGKVTKNSMFSSLDTKMEQFFKTGIMKRSIVLLATRGQPASFAGVAQYLESLGSAKTPDLQNKVAIAFFGFLGQGGPSPQPWSTLLTCQGAKILGLQERFIPLSLEEYSCPPKKDSPTRMDLELLKKIS.

Residues M1–Q77 form a disordered region. The Cytoplasmic segment spans residues M1–T82. A compositionally biased stretch (pro residues) spans R36–R58. The chain crosses the membrane as a helical; Signal-anchor for type II membrane protein span at residues Y83 to L103. The Extracellular segment spans residues T104 to S1378. Residues R121–R247 enclose the G8 domain. N171, N264, N360, N527, and N639 each carry an N-linked (GlcNAc...) asparagine glycan. A GG-type lectin 1 domain is found at G257–A414. The PbH1 1 repeat unit spans residues H672–F694. N-linked (GlcNAc...) asparagine glycosylation occurs at N696. Residues T714 to R736 form a PbH1 2 repeat. N-linked (GlcNAc...) asparagine glycans are attached at residues N742, N854, N905, N996, N1069, N1160, and N1221. Residues N1203–K1363 enclose the GG-type lectin 2 domain.

The protein belongs to the CEMIP family. Requires Ca(2+) as cofactor.

The protein localises to the cell membrane. The catalysed reaction is Random hydrolysis of (1-&gt;4)-linkages between N-acetyl-beta-D-glucosamine and D-glucuronate residues in hyaluronate.. Functionally, cell surface hyaluronidase that mediates the initial cleavage of extracellular high-molecular-weight hyaluronan into intermediate-size hyaluronan. Acts as a regulator of angiogenesis in embryos by mediating degradation of extracellular hyaluronan, thereby promoting VEGF signaling. Acts as a regulator of heart development during myocardial and endocardial morphogenesis: involved in the looping stage of heart morphogenesis. Stimulates migration of endocardial cells and increases both myocardial and endocardial fusion. Involved in the restriction of endocardial cushions (ECs) formation to the atrioventricular canal (AVC). Also required for muscle fiber attachment. Is very specific to hyaluronan; not able to cleave chondroitin sulfate or dermatan sulfate. In Danio rerio (Zebrafish), this protein is Cell surface hyaluronidase (cemip2).